A 169-amino-acid polypeptide reads, in one-letter code: S-ribosylhomocysteine lyase (169 aa).

Residues His-54, His-58, and Cys-129 each contribute to the Fe cation site.

The protein belongs to the LuxS family. Homodimer. Fe cation is required as a cofactor.

It catalyses the reaction S-(5-deoxy-D-ribos-5-yl)-L-homocysteine = (S)-4,5-dihydroxypentane-2,3-dione + L-homocysteine. In terms of biological role, involved in the synthesis of autoinducer 2 (AI-2) which is secreted by bacteria and is used to communicate both the cell density and the metabolic potential of the environment. The regulation of gene expression in response to changes in cell density is called quorum sensing. Catalyzes the transformation of S-ribosylhomocysteine (RHC) to homocysteine (HC) and 4,5-dihydroxy-2,3-pentadione (DPD). This Glaesserella parasuis serovar 5 (strain SH0165) (Haemophilus parasuis) protein is S-ribosylhomocysteine lyase.